The sequence spans 468 residues: 6-phosphogluconate dehydrogenase, decarboxylating (468 aa).

NADP(+) is bound by residues 10–15 (GMAVMG), 33–35 (NRS), 74–76 (VKA), and Asn-102. Substrate-binding positions include Asn-102 and 128–130 (SGG). The Proton acceptor role is filled by Lys-183. 186 to 187 (HN) provides a ligand contact to substrate. Glu-190 (proton donor) is an active-site residue. The substrate site is built by Tyr-191, Lys-260, Arg-287, Arg-445, and His-451.

This sequence belongs to the 6-phosphogluconate dehydrogenase family. In terms of assembly, homodimer.

The catalysed reaction is 6-phospho-D-gluconate + NADP(+) = D-ribulose 5-phosphate + CO2 + NADPH. Its pathway is carbohydrate degradation; pentose phosphate pathway; D-ribulose 5-phosphate from D-glucose 6-phosphate (oxidative stage): step 3/3. Catalyzes the oxidative decarboxylation of 6-phosphogluconate to ribulose 5-phosphate and CO(2), with concomitant reduction of NADP to NADPH. This Escherichia coli protein is 6-phosphogluconate dehydrogenase, decarboxylating (gnd).